The primary structure comprises 427 residues: Serine--tRNA ligase (427 aa).

231-233 (TAE) contacts L-serine. ATP is bound at residue 262–264 (RSE). Glutamate 285 serves as a coordination point for L-serine. Position 349 to 352 (349 to 352 (EISS)) interacts with ATP. Residue serine 385 coordinates L-serine.

Belongs to the class-II aminoacyl-tRNA synthetase family. Type-1 seryl-tRNA synthetase subfamily. Homodimer. The tRNA molecule binds across the dimer.

Its subcellular location is the cytoplasm. The catalysed reaction is tRNA(Ser) + L-serine + ATP = L-seryl-tRNA(Ser) + AMP + diphosphate + H(+). It catalyses the reaction tRNA(Sec) + L-serine + ATP = L-seryl-tRNA(Sec) + AMP + diphosphate + H(+). It functions in the pathway aminoacyl-tRNA biosynthesis; selenocysteinyl-tRNA(Sec) biosynthesis; L-seryl-tRNA(Sec) from L-serine and tRNA(Sec): step 1/1. Functionally, catalyzes the attachment of serine to tRNA(Ser). Is also able to aminoacylate tRNA(Sec) with serine, to form the misacylated tRNA L-seryl-tRNA(Sec), which will be further converted into selenocysteinyl-tRNA(Sec). This chain is Serine--tRNA ligase, found in Rhizobium johnstonii (strain DSM 114642 / LMG 32736 / 3841) (Rhizobium leguminosarum bv. viciae).